Reading from the N-terminus, the 235-residue chain is 2-C-methyl-D-erythritol 4-phosphate cytidylyltransferase (235 aa).

Belongs to the IspD/TarI cytidylyltransferase family. IspD subfamily.

The enzyme catalyses 2-C-methyl-D-erythritol 4-phosphate + CTP + H(+) = 4-CDP-2-C-methyl-D-erythritol + diphosphate. It functions in the pathway isoprenoid biosynthesis; isopentenyl diphosphate biosynthesis via DXP pathway; isopentenyl diphosphate from 1-deoxy-D-xylulose 5-phosphate: step 2/6. In terms of biological role, catalyzes the formation of 4-diphosphocytidyl-2-C-methyl-D-erythritol from CTP and 2-C-methyl-D-erythritol 4-phosphate (MEP). The chain is 2-C-methyl-D-erythritol 4-phosphate cytidylyltransferase from Synechococcus sp. (strain JA-3-3Ab) (Cyanobacteria bacterium Yellowstone A-Prime).